The following is a 209-amino-acid chain: Orotate phosphoribosyltransferase (209 aa).

Residues Arg96, Lys100, His102, and 122 to 130 contribute to the 5-phospho-alpha-D-ribose 1-diphosphate site; that span reads EDLISTGGS. Ser126 is a binding site for orotate.

It belongs to the purine/pyrimidine phosphoribosyltransferase family. PyrE subfamily. As to quaternary structure, homodimer. The cofactor is Mg(2+).

The catalysed reaction is orotidine 5'-phosphate + diphosphate = orotate + 5-phospho-alpha-D-ribose 1-diphosphate. It participates in pyrimidine metabolism; UMP biosynthesis via de novo pathway; UMP from orotate: step 1/2. Catalyzes the transfer of a ribosyl phosphate group from 5-phosphoribose 1-diphosphate to orotate, leading to the formation of orotidine monophosphate (OMP). This is Orotate phosphoribosyltransferase from Streptococcus pyogenes serotype M5 (strain Manfredo).